Reading from the N-terminus, the 120-residue chain is MLKFTEEHEWLNIEGDVATVGITAHAAGQLGDLVFVELPEVGASFSKGDDAATVESVKAASEVYCPLDGEITEINEAITADPELVNSDPMGAGWFFKLKLKNVADADGLLDESGYKELIG.

The region spanning 17 to 99 (VATVGITAHA…MGAGWFFKLK (83 aa)) is the Lipoyl-binding domain. N6-lipoyllysine is present on Lys58.

It belongs to the GcvH family. In terms of assembly, the glycine cleavage system is composed of four proteins: P, T, L and H. It depends on (R)-lipoate as a cofactor.

Its function is as follows. The glycine cleavage system catalyzes the degradation of glycine. The H protein shuttles the methylamine group of glycine from the P protein to the T protein. In Rhizobium rhizogenes (strain K84 / ATCC BAA-868) (Agrobacterium radiobacter), this protein is Glycine cleavage system H protein.